A 282-amino-acid chain; its full sequence is Elongation factor Ts (282 aa).

The segment at Thr80–Val83 is involved in Mg(2+) ion dislocation from EF-Tu.

The protein belongs to the EF-Ts family.

The protein localises to the cytoplasm. In terms of biological role, associates with the EF-Tu.GDP complex and induces the exchange of GDP to GTP. It remains bound to the aminoacyl-tRNA.EF-Tu.GTP complex up to the GTP hydrolysis stage on the ribosome. This Chlamydia trachomatis serovar L2 (strain ATCC VR-902B / DSM 19102 / 434/Bu) protein is Elongation factor Ts.